Here is a 127-residue protein sequence, read N- to C-terminus: UPF0102 protein Paes_0016 (127 aa).

Belongs to the UPF0102 family.

The protein is UPF0102 protein Paes_0016 of Prosthecochloris aestuarii (strain DSM 271 / SK 413).